Consider the following 379-residue polypeptide: Cytochrome b (379 aa).

4 helical membrane passes run 33–53 (FGSLLGACLTIQVITGLFLAM), 77–98 (WTIRYLHANGASMFFMCLFIHV), 113–133 (WNIGIMLLFSVMATAFMGYVL), and 178–198 (FFALHFILPFIISALAMIHLL). 2 residues coordinate heme b: His-83 and His-97. His-182 and His-196 together coordinate heme b. Residue His-201 participates in a ubiquinone binding. 4 helical membrane passes run 226-246 (TKDFLGLLLLILLLMTLTLFY), 288-308 (PGGVVALILSILILAIIPFLQ), 320-340 (LSQFLFWILVADLLTLTWIGG), and 347-367 (FISIGQTASILYFSLMVFIMP).

The protein belongs to the cytochrome b family. The cytochrome bc1 complex contains 11 subunits: 3 respiratory subunits (MT-CYB, CYC1 and UQCRFS1), 2 core proteins (UQCRC1 and UQCRC2) and 6 low-molecular weight proteins (UQCRH/QCR6, UQCRB/QCR7, UQCRQ/QCR8, UQCR10/QCR9, UQCR11/QCR10 and a cleavage product of UQCRFS1). This cytochrome bc1 complex then forms a dimer. It depends on heme b as a cofactor.

The protein resides in the mitochondrion inner membrane. Its function is as follows. Component of the ubiquinol-cytochrome c reductase complex (complex III or cytochrome b-c1 complex) that is part of the mitochondrial respiratory chain. The b-c1 complex mediates electron transfer from ubiquinol to cytochrome c. Contributes to the generation of a proton gradient across the mitochondrial membrane that is then used for ATP synthesis. The sequence is that of Cytochrome b (MT-CYB) from Lepilemur ruficaudatus (Red-tailed sportive lemur).